The primary structure comprises 585 residues: Arginine--tRNA ligase (585 aa).

The short motif at 126-136 (PNIAKEMHVGH) is the 'HIGH' region element.

The protein belongs to the class-I aminoacyl-tRNA synthetase family. In terms of assembly, monomer.

The protein resides in the cytoplasm. The enzyme catalyses tRNA(Arg) + L-arginine + ATP = L-arginyl-tRNA(Arg) + AMP + diphosphate. The chain is Arginine--tRNA ligase from Picosynechococcus sp. (strain ATCC 27264 / PCC 7002 / PR-6) (Agmenellum quadruplicatum).